We begin with the raw amino-acid sequence, 246 residues long: 33kDa venom protein (246 aa).

The signal sequence occupies residues 1-20 (MAGKEVIFIMALFIAVESSP). 7 repeat units span residues 83–96 (GGAVSESVKQKRET), 97–110 (AESLSGSFDKEKAS), 111–124 (AENLSGSFDQQKSS), 125–138 (VDEKSGSVGQQKGA), 139–152 (VEGQSGSGEQRRET), 153–166 (AESQSGSVDQEKAS), and 167–180 (AENLSGSIDKQKVT). Residues 83 to 243 (GGAVSESVKQ…SGSVGNDDDI (161 aa)) are 12 X approximate tandem repeats of [AV][DE]X[VL]SGSX[DE]QX[KR]X[ST]. The segment at 88-246 (ESVKQKRETA…VGNDDDISVQ (159 aa)) is disordered. The segment covering 112 to 123 (ENLSGSFDQQKS) has biased composition (polar residues). Residues 175-186 (DKQKVTVEEKSE) are compositionally biased toward basic and acidic residues. The 8; half-length repeat unit spans residues 181 to 187 (VEEKSEP). Repeat copies occupy residues 188-201 (AQGQSGSVKQKRKT), 202-215 (TENVSGSLDQEKAS), 216-229 (AESLSGSFDQQKSS), and 230-243 (VDEKSGSVGNDDDI). The segment covering 217-228 (ESLSGSFDQQKS) has biased composition (polar residues).

As to expression, expressed by the venom gland.

Its subcellular location is the secreted. The protein is 33kDa venom protein of Chelonus sp. nr. curvimaculatus (Parasitic wasp).